The primary structure comprises 66 residues: Neurotoxin BmK AGP-SYPU1 (66 aa).

In terms of domain architecture, LCN-type CS-alpha/beta spans arginine 2–histidine 64. 4 disulfides stabilise this stretch: cysteine 12/cysteine 63, cysteine 16/cysteine 36, cysteine 22/cysteine 46, and cysteine 26/cysteine 48. Positions arginine 65–arginine 66 are cleaved as a propeptide — removed by a carboxypeptidase.

Expressed by the venom gland.

Its subcellular location is the secreted. Alpha toxins bind voltage-independently at site-3 of sodium channels (Nav) and inhibit the inactivation of the activated channels, thereby blocking neuronal transmission. This toxin has a strong analgesic effect when administered to mice by intraperitoneal injection. The polypeptide is Neurotoxin BmK AGP-SYPU1 (Olivierus martensii (Manchurian scorpion)).